The primary structure comprises 212 residues: Inner membrane-spanning protein YciB (212 aa).

Helical transmembrane passes span 19–39 (FYGA…PVAL), 47–67 (AIYL…ALGL), 82–102 (AVIL…FILW), 105–122 (TLVN…PLFG), 147–167 (LAWV…AYTF), and 177–197 (LFGM…YLGL).

This sequence belongs to the YciB family.

The protein localises to the cell inner membrane. Its function is as follows. Plays a role in cell envelope biogenesis, maintenance of cell envelope integrity and membrane homeostasis. This chain is Inner membrane-spanning protein YciB, found in Thioalkalivibrio sulfidiphilus (strain HL-EbGR7).